Consider the following 341-residue polypeptide: HTH-type transcriptional repressor PurR (341 aa).

The 55-residue stretch at 2–56 folds into the HTH lacI-type domain; that stretch reads ATIKDVAKRANVSTTTVSHVINKTRFVAEETRNAVWAAIKELHYSPSAVARSLKV. The H-T-H motif DNA-binding region spans 4-23; sequence IKDVAKRANVSTTTVSHVIN. A DNA-binding region spans residues 48-56; it reads SAVARSLKV. Hypoxanthine-binding residues include Y73, R190, T192, F221, and D275.

As to quaternary structure, homodimer.

Its pathway is purine metabolism; purine nucleotide biosynthesis [regulation]. In terms of biological role, is the main repressor of the genes involved in the de novo synthesis of purine nucleotides, regulating purB, purC, purEK, purF, purHD, purL, purMN and guaBA expression. PurR is allosterically activated to bind its cognate DNA by binding the purine corepressors, hypoxanthine or guanine, thereby effecting transcription repression. The chain is HTH-type transcriptional repressor PurR from Escherichia fergusonii (strain ATCC 35469 / DSM 13698 / CCUG 18766 / IAM 14443 / JCM 21226 / LMG 7866 / NBRC 102419 / NCTC 12128 / CDC 0568-73).